Here is a 182-residue protein sequence, read N- to C-terminus: DNA-directed RNA polymerase 30 kDa polypeptide (182 aa).

A TFIIS-type zinc finger spans residues 135-175 (STIRCVACKSNNTIPMILQTRSSDEEPTVRVVCKDCGKNFA). Positions 139, 142, 167, and 170 each coordinate Zn(2+).

The protein belongs to the poxviridae DNA-directed RNA polymerase 30 kDa subunit family. As to quaternary structure, this enzyme consists of at least eight subunits.

It catalyses the reaction RNA(n) + a ribonucleoside 5'-triphosphate = RNA(n+1) + diphosphate. Functionally, DNA-dependent RNA polymerase catalyzes the transcription of DNA into RNA using the four ribonucleoside triphosphates as substrates. Rpo30 may have a role in RNA chain elongation. The protein is DNA-directed RNA polymerase 30 kDa polypeptide (RPO30) of Fowlpox virus (strain NVSL) (FPV).